We begin with the raw amino-acid sequence, 357 residues long: 3-dehydroquinate synthase (357 aa).

NAD(+) is bound by residues 126–127 (TT), lysine 139, and lysine 148. 3 residues coordinate Zn(2+): glutamate 181, histidine 244, and histidine 261.

Belongs to the sugar phosphate cyclases superfamily. Dehydroquinate synthase family. Requires Co(2+) as cofactor. It depends on Zn(2+) as a cofactor. NAD(+) is required as a cofactor.

It is found in the cytoplasm. The catalysed reaction is 7-phospho-2-dehydro-3-deoxy-D-arabino-heptonate = 3-dehydroquinate + phosphate. It functions in the pathway metabolic intermediate biosynthesis; chorismate biosynthesis; chorismate from D-erythrose 4-phosphate and phosphoenolpyruvate: step 2/7. Functionally, catalyzes the conversion of 3-deoxy-D-arabino-heptulosonate 7-phosphate (DAHP) to dehydroquinate (DHQ). This chain is 3-dehydroquinate synthase, found in Solibacter usitatus (strain Ellin6076).